Consider the following 281-residue polypeptide: Ribosomal RNA small subunit methyltransferase A (281 aa).

6 residues coordinate S-adenosyl-L-methionine: His-25, Leu-27, Gly-52, Glu-74, Asp-100, and Asn-119.

This sequence belongs to the class I-like SAM-binding methyltransferase superfamily. rRNA adenine N(6)-methyltransferase family. RsmA subfamily.

It localises to the cytoplasm. It catalyses the reaction adenosine(1518)/adenosine(1519) in 16S rRNA + 4 S-adenosyl-L-methionine = N(6)-dimethyladenosine(1518)/N(6)-dimethyladenosine(1519) in 16S rRNA + 4 S-adenosyl-L-homocysteine + 4 H(+). Specifically dimethylates two adjacent adenosines (A1518 and A1519) in the loop of a conserved hairpin near the 3'-end of 16S rRNA in the 30S particle. May play a critical role in biogenesis of 30S subunits. This Paramagnetospirillum magneticum (strain ATCC 700264 / AMB-1) (Magnetospirillum magneticum) protein is Ribosomal RNA small subunit methyltransferase A.